A 152-amino-acid chain; its full sequence is Globin-1 subunit beta (152 aa).

Ser2 is subject to N-acetylserine. The Globin domain occupies 12–152; it reads VSNADQKDLL…SLVAVVQAAL (141 aa). Heme b is bound by residues His72 and His104.

It belongs to the globin family. In terms of assembly, heterotetramer of two alpha chains and two beta chains.

The chain is Globin-1 subunit beta from Anadara trapezia (Sydney cockle).